The primary structure comprises 520 residues: 2-isopropylmalate synthase (520 aa).

Positions 5–267 (VIIFDTTLRD…HTNINHQEIY (263 aa)) constitute a Pyruvate carboxyltransferase domain. The Mn(2+) site is built by aspartate 14, histidine 202, histidine 204, and asparagine 238. A regulatory domain region spans residues 392 to 520 (RLDYFSVQSG…RLQQNNQEMV (129 aa)).

This sequence belongs to the alpha-IPM synthase/homocitrate synthase family. LeuA type 1 subfamily. As to quaternary structure, homodimer. Mn(2+) is required as a cofactor.

Its subcellular location is the cytoplasm. The catalysed reaction is 3-methyl-2-oxobutanoate + acetyl-CoA + H2O = (2S)-2-isopropylmalate + CoA + H(+). It participates in amino-acid biosynthesis; L-leucine biosynthesis; L-leucine from 3-methyl-2-oxobutanoate: step 1/4. Catalyzes the condensation of the acetyl group of acetyl-CoA with 3-methyl-2-oxobutanoate (2-ketoisovalerate) to form 3-carboxy-3-hydroxy-4-methylpentanoate (2-isopropylmalate). This Yersinia enterocolitica serotype O:8 / biotype 1B (strain NCTC 13174 / 8081) protein is 2-isopropylmalate synthase.